The following is a 459-amino-acid chain: Bifunctional protein GlmU (459 aa).

The segment at 1–228 is pyrophosphorylase; it reads MNFKAIILAA…IEELMGVNSR (228 aa). UDP-N-acetyl-alpha-D-glucosamine-binding positions include 8–11, lysine 22, glutamine 72, and 77–78; these read LAAG and GT. Mg(2+) is bound at residue aspartate 101. The UDP-N-acetyl-alpha-D-glucosamine site is built by glycine 138, glutamate 153, asparagine 168, and asparagine 226. Asparagine 226 contacts Mg(2+). The interval 229–249 is linker; sequence VELSKAEEIMRRRINESHMVN. Residues 250–459 are N-acetyltransferase; sequence GVTIIDTNST…KKNQKDDQSK (210 aa). The UDP-N-acetyl-alpha-D-glucosamine site is built by arginine 331 and lysine 349. Histidine 361 serves as the catalytic Proton acceptor. 2 residues coordinate UDP-N-acetyl-alpha-D-glucosamine: tyrosine 364 and asparagine 375. Acetyl-CoA is bound by residues 384–385, serine 403, threonine 421, and arginine 438; that span reads NY.

It in the N-terminal section; belongs to the N-acetylglucosamine-1-phosphate uridyltransferase family. In the C-terminal section; belongs to the transferase hexapeptide repeat family. Homotrimer. Mg(2+) serves as cofactor.

Its subcellular location is the cytoplasm. It catalyses the reaction alpha-D-glucosamine 1-phosphate + acetyl-CoA = N-acetyl-alpha-D-glucosamine 1-phosphate + CoA + H(+). The enzyme catalyses N-acetyl-alpha-D-glucosamine 1-phosphate + UTP + H(+) = UDP-N-acetyl-alpha-D-glucosamine + diphosphate. The protein operates within nucleotide-sugar biosynthesis; UDP-N-acetyl-alpha-D-glucosamine biosynthesis; N-acetyl-alpha-D-glucosamine 1-phosphate from alpha-D-glucosamine 6-phosphate (route II): step 2/2. It functions in the pathway nucleotide-sugar biosynthesis; UDP-N-acetyl-alpha-D-glucosamine biosynthesis; UDP-N-acetyl-alpha-D-glucosamine from N-acetyl-alpha-D-glucosamine 1-phosphate: step 1/1. Its pathway is bacterial outer membrane biogenesis; LPS lipid A biosynthesis. Catalyzes the last two sequential reactions in the de novo biosynthetic pathway for UDP-N-acetylglucosamine (UDP-GlcNAc). The C-terminal domain catalyzes the transfer of acetyl group from acetyl coenzyme A to glucosamine-1-phosphate (GlcN-1-P) to produce N-acetylglucosamine-1-phosphate (GlcNAc-1-P), which is converted into UDP-GlcNAc by the transfer of uridine 5-monophosphate (from uridine 5-triphosphate), a reaction catalyzed by the N-terminal domain. In Clostridioides difficile (strain 630) (Peptoclostridium difficile), this protein is Bifunctional protein GlmU.